The chain runs to 134 residues: 6,7-dimethyl-8-ribityllumazine synthase (134 aa).

Residues Phe-11, 43-45 (AYD), and 67-69 (AIV) contribute to the 5-amino-6-(D-ribitylamino)uracil site. 72-73 (DT) provides a ligand contact to (2S)-2-hydroxy-3-oxobutyl phosphate. His-75 acts as the Proton donor in catalysis. 5-amino-6-(D-ribitylamino)uracil is bound at residue Phe-100. A (2S)-2-hydroxy-3-oxobutyl phosphate-binding site is contributed by Arg-115.

The protein belongs to the DMRL synthase family.

The enzyme catalyses (2S)-2-hydroxy-3-oxobutyl phosphate + 5-amino-6-(D-ribitylamino)uracil = 6,7-dimethyl-8-(1-D-ribityl)lumazine + phosphate + 2 H2O + H(+). It participates in cofactor biosynthesis; riboflavin biosynthesis; riboflavin from 2-hydroxy-3-oxobutyl phosphate and 5-amino-6-(D-ribitylamino)uracil: step 1/2. Catalyzes the formation of 6,7-dimethyl-8-ribityllumazine by condensation of 5-amino-6-(D-ribitylamino)uracil with 3,4-dihydroxy-2-butanone 4-phosphate. This is the penultimate step in the biosynthesis of riboflavin. In Halorubrum lacusprofundi (strain ATCC 49239 / DSM 5036 / JCM 8891 / ACAM 34), this protein is 6,7-dimethyl-8-ribityllumazine synthase.